Reading from the N-terminus, the 184-residue chain is GTP cyclohydrolase 1 (184 aa).

The Zn(2+) site is built by C75, H78, and C146.

The protein belongs to the GTP cyclohydrolase I family. Toroid-shaped homodecamer, composed of two pentamers of five dimers.

It catalyses the reaction GTP + H2O = 7,8-dihydroneopterin 3'-triphosphate + formate + H(+). Its pathway is cofactor biosynthesis; 7,8-dihydroneopterin triphosphate biosynthesis; 7,8-dihydroneopterin triphosphate from GTP: step 1/1. This is GTP cyclohydrolase 1 from Streptococcus pneumoniae serotype 2 (strain D39 / NCTC 7466).